Here is a 536-residue protein sequence, read N- to C-terminus: uncharacterized protein (536 aa).

The Radical SAM core domain occupies 163–394 (LDAYDSMSVQ…MNFIPTRPLE (232 aa)). The [4Fe-4S] cluster site is built by cysteine 177, cysteine 181, and cysteine 184.

Requires [4Fe-4S] cluster as cofactor.

This is an uncharacterized protein from Synechocystis sp. (strain ATCC 27184 / PCC 6803 / Kazusa).